Here is a 315-residue protein sequence, read N- to C-terminus: Transcription antitermination protein NusB (315 aa).

Positions 296 to 315 (SANFDTKSAELNDADEKSQD) are disordered. Residues 302–315 (KSAELNDADEKSQD) show a composition bias toward basic and acidic residues.

This sequence belongs to the NusB family.

Its function is as follows. Involved in transcription antitermination. Required for transcription of ribosomal RNA (rRNA) genes. Binds specifically to the boxA antiterminator sequence of the ribosomal RNA (rrn) operons. This Psychrobacter cryohalolentis (strain ATCC BAA-1226 / DSM 17306 / VKM B-2378 / K5) protein is Transcription antitermination protein NusB.